Consider the following 131-residue polypeptide: Glycine cleavage system H protein (131 aa).

Positions 24-106 constitute a Lipoyl-binding domain; the sequence is RAIVGVSDHA…YGEGWIMVIE (83 aa). At K65 the chain carries N6-lipoyllysine.

This sequence belongs to the GcvH family. In terms of assembly, the glycine cleavage system is composed of four proteins: P, T, L and H. (R)-lipoate serves as cofactor.

Functionally, the glycine cleavage system catalyzes the degradation of glycine. The H protein shuttles the methylamine group of glycine from the P protein to the T protein. This is Glycine cleavage system H protein from Xylella fastidiosa (strain Temecula1 / ATCC 700964).